A 460-amino-acid polypeptide reads, in one-letter code: A-type ATP synthase subunit B (460 aa).

It belongs to the ATPase alpha/beta chains family. Has multiple subunits with at least A(3), B(3), C, D, E, F, H, I and proteolipid K(x).

It is found in the cell membrane. Functionally, component of the A-type ATP synthase that produces ATP from ADP in the presence of a proton gradient across the membrane. The B chain is a regulatory subunit. In Thermofilum pendens (strain DSM 2475 / Hrk 5), this protein is A-type ATP synthase subunit B.